The sequence spans 881 residues: Putative cation exchanger C521.04c (881 aa).

Residues 1 to 19 are compositionally biased toward polar residues; sequence MSQPADINQSESSAETITQ. 2 disordered regions span residues 1-39 and 52-142; these read MSQP…EQNL and ADAT…LRSE. Residues 63 to 77 show a composition bias toward basic and acidic residues; sequence NDRDIYSPREIDQYT. Positions 83-95 are enriched in polar residues; the sequence is RTDPSTSTISNAR. The segment covering 99-113 has biased composition (low complexity); sequence RNSVSRLSRSSSNVR. Phosphoserine is present on Ser-129. A run of 8 helical transmembrane segments spans residues 200-220, 329-349, 407-427, 438-458, 471-491, 504-524, 537-557, and 594-614; these read IWLI…YIFF, LIIA…IFFV, IYII…FGFF, VFLF…IGMA, GAFI…SVAL, IGSI…AGAI, GATS…TMLF, and LPFT…GLWF. A disordered region spans residues 641–717; the sequence is VGEPVNQDTA…SQNSHGDDAP (77 aa). Residues 646 to 657 are compositionally biased toward polar residues; sequence NQDTAGNMSDSS. A compositionally biased stretch (low complexity) spans 678–688; the sequence is SSGLSSNGSEN. Transmembrane regions (helical) follow at residues 726–746, 762–782, 794–814, 828–848, and 859–879; these read IILL…VEHV, LTLF…SFAL, SAYA…YSLF, LFTM…VFLL, and YFKG…FTFF.

It belongs to the Ca(2+):cation antiporter (CaCA) (TC 2.A.19) family.

It localises to the endoplasmic reticulum membrane. In terms of biological role, putative cation exchanger. The chain is Putative cation exchanger C521.04c from Schizosaccharomyces pombe (strain 972 / ATCC 24843) (Fission yeast).